Here is an 833-residue protein sequence, read N- to C-terminus: Multiple RNA-binding domain-containing protein 1 (833 aa).

Positions 2-83 (SRIIIKNIPR…SRIEVHRALD (82 aa)) constitute an RRM 1 domain. The disordered stretch occupies residues 160-251 (ENEEVFDTEI…DAQAPLSDDE (92 aa)). 2 stretches are compositionally biased toward basic and acidic residues: residues 188 to 205 (AAKRHEGDSIKSTEHDST) and 213 to 222 (DGREKSSSEL). 4 consecutive RRM domains span residues 323–401 (KRLF…PAKA), 506–578 (NVLL…KAPR), 619–702 (ATIY…LSHQ), and 721–798 (TKIL…YASN).

This sequence belongs to the RRM MRD1 family.

The protein localises to the nucleus. In terms of biological role, involved in pre-rRNA processing. The chain is Multiple RNA-binding domain-containing protein 1 (mrd1) from Schizosaccharomyces pombe (strain 972 / ATCC 24843) (Fission yeast).